Consider the following 402-residue polypeptide: Digeranylgeranylglycerophospholipid reductase (402 aa).

Positions 15, 34, 45, 46, 48, 99, 123, 280, 292, and 293 each coordinate FAD.

Belongs to the geranylgeranyl reductase family. DGGGPL reductase subfamily. FAD is required as a cofactor.

The enzyme catalyses a 2,3-bis-O-phytanyl-sn-glycerol 1-phospholipid + 8 oxidized 2[4Fe-4S]-[ferredoxin] = a 2,3-bis-O-(geranylgeranyl)-sn-glycerol 1-phospholipid + 8 reduced 2[4Fe-4S]-[ferredoxin] + 16 H(+). It carries out the reaction 2,3-bis-O-(phytanyl)-sn-glycerol 1-phosphate + 8 oxidized 2[4Fe-4S]-[ferredoxin] = 2,3-bis-O-(geranylgeranyl)-sn-glycerol 1-phosphate + 8 reduced 2[4Fe-4S]-[ferredoxin] + 16 H(+). The catalysed reaction is a 2,3-bis-O-phytanyl-sn-glycerol 1-phospholipid + 8 A = a 2,3-bis-O-(geranylgeranyl)-sn-glycerol 1-phospholipid + 8 AH2. It catalyses the reaction CDP-2,3-bis-O-(geranylgeranyl)-sn-glycerol + 8 AH2 = CDP-2,3-bis-O-(phytanyl)-sn-glycerol + 8 A. The enzyme catalyses archaetidylserine + 8 AH2 = 2,3-bis-O-phytanyl-sn-glycero-3-phospho-L-serine + 8 A. The protein operates within membrane lipid metabolism; glycerophospholipid metabolism. Functionally, is involved in the reduction of 2,3-digeranylgeranylglycerophospholipids (unsaturated archaeols) into 2,3-diphytanylglycerophospholipids (saturated archaeols) in the biosynthesis of archaeal membrane lipids. Catalyzes the formation of archaetidic acid (2,3-di-O-phytanyl-sn-glyceryl phosphate) from 2,3-di-O-geranylgeranylglyceryl phosphate (DGGGP) via the hydrogenation of each double bond of the isoprenoid chains. Is also probably able to reduce double bonds of geranyl groups in CDP-2,3-bis-O-(geranylgeranyl)-sn-glycerol and archaetidylserine, thus acting at various stages in the biosynthesis of archaeal membrane lipids. This chain is Digeranylgeranylglycerophospholipid reductase, found in Methanospirillum hungatei JF-1 (strain ATCC 27890 / DSM 864 / NBRC 100397 / JF-1).